The following is a 265-amino-acid chain: 3-deoxy-manno-octulosonate cytidylyltransferase 2 (265 aa).

This sequence belongs to the KdsB family.

It localises to the cytoplasm. It carries out the reaction 3-deoxy-alpha-D-manno-oct-2-ulosonate + CTP = CMP-3-deoxy-beta-D-manno-octulosonate + diphosphate. It participates in nucleotide-sugar biosynthesis; CMP-3-deoxy-D-manno-octulosonate biosynthesis; CMP-3-deoxy-D-manno-octulosonate from 3-deoxy-D-manno-octulosonate and CTP: step 1/1. It functions in the pathway bacterial outer membrane biogenesis; lipopolysaccharide biosynthesis. Functionally, activates KDO (a required 8-carbon sugar) for incorporation into bacterial lipopolysaccharide in Gram-negative bacteria. The sequence is that of 3-deoxy-manno-octulosonate cytidylyltransferase 2 from Burkholderia lata (strain ATCC 17760 / DSM 23089 / LMG 22485 / NCIMB 9086 / R18194 / 383).